The chain runs to 263 residues: MSDILNKIIAVKREEITDAINRKPLPAMRKDAESRVLTRDFVGALRAKIAAGKPAVIAEIKKASPSKGVLRADFIPADIAQSYAEFGAACLSVLTDQQFFQGSIDYLKQARASCSLPVLRKDFIIDAYQVYESRVMGADCILLIAACLDDAQMKTLEALAMSLDMAVLVEVHDEAELERALKLRTPLIGINNRNLNTFEVSLDTTLRLMGKVPAERLLVTESGITTPEDVKRMRDARVNAFLVGEAFMRADEPGVALAELFGE.

This sequence belongs to the TrpC family.

It catalyses the reaction 1-(2-carboxyphenylamino)-1-deoxy-D-ribulose 5-phosphate + H(+) = (1S,2R)-1-C-(indol-3-yl)glycerol 3-phosphate + CO2 + H2O. It participates in amino-acid biosynthesis; L-tryptophan biosynthesis; L-tryptophan from chorismate: step 4/5. In Polaromonas naphthalenivorans (strain CJ2), this protein is Indole-3-glycerol phosphate synthase.